Consider the following 72-residue polypeptide: MAQHSKYSDAQLSAIVNDMIAVLEKHKAPVDLLLIALGNMASNLLTTSVPQTQREALAQAFSNSLINAVKTR.

It belongs to the UPF0352 family.

This is UPF0352 protein CGSHiGG_07710 from Haemophilus influenzae (strain PittGG).